A 257-amino-acid polypeptide reads, in one-letter code: Large ribosomal subunit protein uL2 (257 aa).

The tract at residues 210–231 (PHGGGNHQHIGKASTVKRGTSA) is disordered.

It belongs to the universal ribosomal protein uL2 family.

Its subcellular location is the cytoplasm. This chain is Large ribosomal subunit protein uL2 (RpL8), found in Mamestra brassicae (Cabbage moth).